The chain runs to 323 residues: Palmitoyltransferase ZDHHC20-B (323 aa).

Residues 1–14 (MAPTHVLRCCQRGL) lie on the Cytoplasmic side of the membrane. Residues 15–35 (AWIPVIFIALVVCWSYYAYVV) form a helical membrane-spanning segment. Over 36-41 (ELCLLV) the chain is Lumenal. A helical membrane pass occupies residues 42-62 (YLVVFHLSFVMFVWSYWKTIF). Residues 63–157 (TKPANPSKEF…NNCVGFSNYK (95 aa)) are Cytoplasmic-facing. Positions 114 to 164 (RYCDRCQVIKPDRCHHCSACDMCVLKMDHHCPWVNNCVGFSNYKFFILFLT) constitute a DHHC domain. C144 functions as the S-palmitoyl cysteine intermediate in the catalytic mechanism. A helical transmembrane segment spans residues 158-178 (FFILFLTYSLVYCLFIAASVL). Over 179-195 (QYFIKFWTSDLPESHAK) the chain is Lumenal. Residues 196-219 (FHVLFLFFVAAMFCISILSLFTYH) form a helical membrane-spanning segment. Residues 220-323 (LWLVGKNRST…KQAKKKKTDE (104 aa)) are Cytoplasmic-facing.

It belongs to the DHHC palmitoyltransferase family.

The protein resides in the golgi apparatus membrane. Its subcellular location is the cell membrane. It localises to the cytoplasm. It is found in the perinuclear region. The protein localises to the endoplasmic reticulum membrane. The protein resides in the endoplasmic reticulum-Golgi intermediate compartment membrane. The catalysed reaction is L-cysteinyl-[protein] + hexadecanoyl-CoA = S-hexadecanoyl-L-cysteinyl-[protein] + CoA. The enzyme catalyses L-cysteinyl-[protein] + tetradecanoyl-CoA = S-tetradecanoyl-L-cysteinyl-[protein] + CoA. It carries out the reaction L-cysteinyl-[protein] + octadecanoyl-CoA = S-octadecanoyl-L-cysteinyl-[protein] + CoA. Its function is as follows. Palmitoyltransferase that could catalyze the addition of palmitate onto various protein substrates. Catalyzes palmitoylation of Cys residues on protein substrates and has a preference for acyl-CoA with C16 fatty acid chains but may also utilize acyl-CoA with C14 and C18 fatty acid chains. This Danio rerio (Zebrafish) protein is Palmitoyltransferase ZDHHC20-B (zdhhc20b).